The following is a 69-amino-acid chain: Cytochrome c oxidase subunit 8A, mitochondrial (69 aa).

The transit peptide at 1 to 25 (MSVLTPLLLRSLTGSARRLMVPRAQ) directs the protein to the mitochondrion. Positions 2–19 (SVLTPLLLRSLTGSARRL) match the SIFI-degron motif. The Mitochondrial matrix portion of the chain corresponds to 26–36 (VHSKPAREQLG). The chain crosses the membrane as a helical span at residues 37–60 (VLDITIGLTSCFVCCLLPAGWVLS). Topologically, residues 61–69 (HLESYKKRE) are mitochondrial intermembrane.

This sequence belongs to the cytochrome c oxidase VIII family. Component of the cytochrome c oxidase (complex IV, CIV), a multisubunit enzyme composed of 14 subunits. The complex is composed of a catalytic core of 3 subunits MT-CO1, MT-CO2 and MT-CO3, encoded in the mitochondrial DNA, and 11 supernumerary subunits COX4I, COX5A, COX5B, COX6A, COX6B, COX6C, COX7A, COX7B, COX7C, COX8 and NDUFA4, which are encoded in the nuclear genome. The complex exists as a monomer or a dimer and forms supercomplexes (SCs) in the inner mitochondrial membrane with NADH-ubiquinone oxidoreductase (complex I, CI) and ubiquinol-cytochrome c oxidoreductase (cytochrome b-c1 complex, complex III, CIII), resulting in different assemblies (supercomplex SCI(1)III(2)IV(1) and megacomplex MCI(2)III(2)IV(2)). In terms of processing, in response to mitochondrial stress, the precursor protein is ubiquitinated by the SIFI complex in the cytoplasm before mitochondrial import, leading to its degradation. Within the SIFI complex, UBR4 initiates ubiquitin chain that are further elongated or branched by KCMF1.

The protein resides in the mitochondrion inner membrane. Its pathway is energy metabolism; oxidative phosphorylation. Component of the cytochrome c oxidase, the last enzyme in the mitochondrial electron transport chain which drives oxidative phosphorylation. The respiratory chain contains 3 multisubunit complexes succinate dehydrogenase (complex II, CII), ubiquinol-cytochrome c oxidoreductase (cytochrome b-c1 complex, complex III, CIII) and cytochrome c oxidase (complex IV, CIV), that cooperate to transfer electrons derived from NADH and succinate to molecular oxygen, creating an electrochemical gradient over the inner membrane that drives transmembrane transport and the ATP synthase. Cytochrome c oxidase is the component of the respiratory chain that catalyzes the reduction of oxygen to water. Electrons originating from reduced cytochrome c in the intermembrane space (IMS) are transferred via the dinuclear copper A center (CU(A)) of subunit 2 and heme A of subunit 1 to the active site in subunit 1, a binuclear center (BNC) formed by heme A3 and copper B (CU(B)). The BNC reduces molecular oxygen to 2 water molecules using 4 electrons from cytochrome c in the IMS and 4 protons from the mitochondrial matrix. The chain is Cytochrome c oxidase subunit 8A, mitochondrial (Cox8a) from Mus musculus (Mouse).